The primary structure comprises 343 residues: Protein phosphatase 2C homolog 7, mitochondrial (343 aa).

Residues 1–39 (MFANVGFRTLRVSRGPLYGSCSQIISFSKRTFYSSAKSG) constitute a mitochondrion transit peptide. The PPM-type phosphatase domain occupies 76-342 (IYQKLKDSIR…DDITVVVVRV (267 aa)). Residues Asp109, Gly110, and Asp265 each contribute to the Mn(2+) site.

It depends on Mg(2+) as a cofactor. The cofactor is Mn(2+).

It is found in the mitochondrion. It carries out the reaction O-phospho-L-seryl-[protein] + H2O = L-seryl-[protein] + phosphate. The catalysed reaction is O-phospho-L-threonyl-[protein] + H2O = L-threonyl-[protein] + phosphate. Its function is as follows. Protein phosphatase which positively regulates biosynthesis of the ubiquinone, coenzyme Q. Dephosphorylates and activates the ubiquinone biosynthesis protein CAT5/COQ7. Also dephosphorylates CIT1 on 'Ser-462', which leads to its activation. This Saccharomyces cerevisiae (strain ATCC 204508 / S288c) (Baker's yeast) protein is Protein phosphatase 2C homolog 7, mitochondrial (PTC7).